The primary structure comprises 337 residues: Inositol 2-dehydrogenase (337 aa).

Belongs to the Gfo/Idh/MocA family. In terms of assembly, homotetramer.

The catalysed reaction is myo-inositol + NAD(+) = scyllo-inosose + NADH + H(+). Its function is as follows. Involved in the oxidation of myo-inositol (MI) to 2-keto-myo-inositol (2KMI or 2-inosose). The chain is Inositol 2-dehydrogenase from Corynebacterium glutamicum (strain R).